The chain runs to 238 residues: Large ribosomal subunit protein uL5c (238 aa).

The protein belongs to the universal ribosomal protein uL5 family. Part of the 50S ribosomal subunit; contacts the 5S rRNA.

Its subcellular location is the plastid. It localises to the chloroplast. Binds 5S rRNA, forms part of the central protuberance of the 50S subunit. This Trieres chinensis (Marine centric diatom) protein is Large ribosomal subunit protein uL5c (rpl5).